The primary structure comprises 124 residues: Glutaredoxin-2 (124 aa).

The cysteines at positions 13 and 16 are disulfide-linked.

The protein belongs to the glutaredoxin family. Homodimer.

Its subcellular location is the host cytoplasm. Functionally, glutaredoxin necessary for virion morphogenesis and virus replication. Functions as a thiol-disulfide transfer protein between membrane-associated OPG128 and substrates OPG095 or OPG053. The complete pathway for formation of disulfide bonds in intracellular virion membrane proteins sequentially involves oxidation of OPG072, OPG128 and OPG088. Exhibit thioltransferase and dehydroascorbate reductase activities in vitro. The polypeptide is Glutaredoxin-2 (OPG088) (Camelus).